The chain runs to 401 residues: Probable trafficking protein particle complex subunit 13 homolog (401 aa).

This sequence belongs to the TRAPPC13 family.

This Caenorhabditis briggsae protein is Probable trafficking protein particle complex subunit 13 homolog.